The chain runs to 428 residues: Succinyl-CoA--L-malate CoA-transferase alpha subunit (428 aa).

The interval 1–31 (MPPTGEEPSGHAESKPPASDPMSTPGTGQEQ) is disordered. Positions 21–31 (PMSTPGTGQEQ) are enriched in polar residues. Asp200 acts as the Nucleophile in catalysis.

Belongs to the CoA-transferase III family. Forms a large complex composed of six heterodimers (alpha, beta).

The enzyme catalyses succinyl-CoA + (S)-malate = (S)-malyl-CoA + succinate. It carries out the reaction (3S)-citramalate + succinyl-CoA = (3S)-citramalyl-CoA + succinate. Its function is as follows. Involved in the 3-hydroxypropionate cycle used for autotrophic carbon dioxide fixation. Catalyzes the transfer of CoA moiety from succinyl-CoA to L-malate to yield L-malyl-CoA. It is highly specific for succinyl-CoA as the CoA donor, however it can accept L-citramalate instead of L-malate as the CoA acceptor. This is Succinyl-CoA--L-malate CoA-transferase alpha subunit (smtA) from Chloroflexus aurantiacus.